The chain runs to 321 residues: Lipoyl synthase (321 aa).

[4Fe-4S] cluster contacts are provided by Cys68, Cys73, Cys79, Cys94, Cys98, Cys101, and Ser308. Residues 80-297 (FNHGTATFMI…KAEAMAMGFT (218 aa)) enclose the Radical SAM core domain.

This sequence belongs to the radical SAM superfamily. Lipoyl synthase family. [4Fe-4S] cluster is required as a cofactor.

Its subcellular location is the cytoplasm. The enzyme catalyses [[Fe-S] cluster scaffold protein carrying a second [4Fe-4S](2+) cluster] + N(6)-octanoyl-L-lysyl-[protein] + 2 oxidized [2Fe-2S]-[ferredoxin] + 2 S-adenosyl-L-methionine + 4 H(+) = [[Fe-S] cluster scaffold protein] + N(6)-[(R)-dihydrolipoyl]-L-lysyl-[protein] + 4 Fe(3+) + 2 hydrogen sulfide + 2 5'-deoxyadenosine + 2 L-methionine + 2 reduced [2Fe-2S]-[ferredoxin]. Its pathway is protein modification; protein lipoylation via endogenous pathway; protein N(6)-(lipoyl)lysine from octanoyl-[acyl-carrier-protein]: step 2/2. In terms of biological role, catalyzes the radical-mediated insertion of two sulfur atoms into the C-6 and C-8 positions of the octanoyl moiety bound to the lipoyl domains of lipoate-dependent enzymes, thereby converting the octanoylated domains into lipoylated derivatives. This Enterobacter sp. (strain 638) protein is Lipoyl synthase.